Here is a 139-residue protein sequence, read N- to C-terminus: Putative truncated protein trichome birefringence-like 46 (139 aa).

The protein belongs to the PC-esterase family. TBL subfamily.

The protein is Putative truncated protein trichome birefringence-like 46 (TBL46) of Arabidopsis thaliana (Mouse-ear cress).